The following is a 389-amino-acid chain: Protein MEI2-like 7 (389 aa).

Residues 170 to 184 are compositionally biased toward basic residues; it reads RRGMSKVYKPRKPQR. Positions 170 to 211 are disordered; the sequence is RRGMSKVYKPRKPQRAGRERSPSPSPVFTTRPMSPTPPMQKL. The RRM domain occupies 216–320; sequence TTVMVRNIPN…KIIDIRAARI (105 aa). A disordered region spans residues 351–370; that stretch reads PRDGSTAGAGAPSPPAVKTV.

Functionally, probable RNA-binding protein that may play a role in growth regulation. The protein is Protein MEI2-like 7 (OML7) of Oryza sativa subsp. japonica (Rice).